We begin with the raw amino-acid sequence, 273 residues long: Cell division protein FtsQ (273 aa).

The Cytoplasmic segment spans residues 1-10 (MWNDARTINL). The helical transmembrane segment at 11–31 (IANTLAVLAVAAMLLAGVAWV) threads the bilayer. At 32–273 (AQRPYFTLAA…HSKSKPAKKR (242 aa)) the chain is on the periplasmic side. Residues 37–110 (FTLAAIEIES…NTLRVRVEEQ (74 aa)) enclose the POTRA domain.

It belongs to the FtsQ/DivIB family. FtsQ subfamily. As to quaternary structure, part of a complex composed of FtsB, FtsL and FtsQ.

It is found in the cell inner membrane. Its function is as follows. Essential cell division protein. May link together the upstream cell division proteins, which are predominantly cytoplasmic, with the downstream cell division proteins, which are predominantly periplasmic. May control correct divisome assembly. The sequence is that of Cell division protein FtsQ from Bordetella pertussis (strain Tohama I / ATCC BAA-589 / NCTC 13251).